A 54-amino-acid chain; its full sequence is ATP synthase F(0) complex subunit 8 (54 aa).

A helical transmembrane segment spans residues 9–25 (WVFLFFLVWLVLGFLGL).

The protein belongs to the ATPase protein 8 family. Component of the ATP synthase complex composed at least of ATP5F1A/subunit alpha, ATP5F1B/subunit beta, ATP5MC1/subunit c (homooctomer), MT-ATP6/subunit a, MT-ATP8/subunit 8, ATP5ME/subunit e, ATP5MF/subunit f, ATP5MG/subunit g, ATP5MK/subunit k, ATP5MJ/subunit j, ATP5F1C/subunit gamma, ATP5F1D/subunit delta, ATP5F1E/subunit epsilon, ATP5PF/subunit F6, ATP5PB/subunit b, ATP5PD/subunit d, ATP5PO/subunit OSCP. ATP synthase complex consists of a soluble F(1) head domain (subunits alpha(3) and beta(3)) - the catalytic core - and a membrane F(0) domain - the membrane proton channel (subunits c, a, 8, e, f, g, k and j). These two domains are linked by a central stalk (subunits gamma, delta, and epsilon) rotating inside the F1 region and a stationary peripheral stalk (subunits F6, b, d, and OSCP).

It localises to the mitochondrion membrane. Functionally, subunit 8, of the mitochondrial membrane ATP synthase complex (F(1)F(0) ATP synthase or Complex V) that produces ATP from ADP in the presence of a proton gradient across the membrane which is generated by electron transport complexes of the respiratory chain. ATP synthase complex consist of a soluble F(1) head domain - the catalytic core - and a membrane F(1) domain - the membrane proton channel. These two domains are linked by a central stalk rotating inside the F(1) region and a stationary peripheral stalk. During catalysis, ATP synthesis in the catalytic domain of F(1) is coupled via a rotary mechanism of the central stalk subunits to proton translocation. In vivo, can only synthesize ATP although its ATP hydrolase activity can be activated artificially in vitro. Part of the complex F(0) domain. This is ATP synthase F(0) complex subunit 8 from Branchiostoma lanceolatum (Common lancelet).